The chain runs to 506 residues: Light-independent protochlorophyllide reductase subunit B (506 aa).

[4Fe-4S] cluster is bound at residue Asp36. The active-site Proton donor is Asp279. 414–415 (GL) provides a ligand contact to substrate.

It belongs to the ChlB/BchB/BchZ family. Protochlorophyllide reductase is composed of three subunits; BchL, BchN and BchB. Forms a heterotetramer of two BchB and two BchN subunits. Requires [4Fe-4S] cluster as cofactor.

The enzyme catalyses chlorophyllide a + oxidized 2[4Fe-4S]-[ferredoxin] + 2 ADP + 2 phosphate = protochlorophyllide a + reduced 2[4Fe-4S]-[ferredoxin] + 2 ATP + 2 H2O. It functions in the pathway porphyrin-containing compound metabolism; bacteriochlorophyll biosynthesis (light-independent). In terms of biological role, component of the dark-operative protochlorophyllide reductase (DPOR) that uses Mg-ATP and reduced ferredoxin to reduce ring D of protochlorophyllide (Pchlide) to form chlorophyllide a (Chlide). This reaction is light-independent. The NB-protein (BchN-BchB) is the catalytic component of the complex. The protein is Light-independent protochlorophyllide reductase subunit B of Methylobacterium sp. (strain 4-46).